A 250-amino-acid polypeptide reads, in one-letter code: MTDRYSFSLTTFSPSGKLGQIDYALTAVKQGVTSLGIKATNGVVIATEKKSSSPLAMSETLSKVSLLTPDIGAVYSGMGPDYRVLVDKSRKVAHTSYKRIYGEYPPTKLLVSEVAKIMQEATQSGGVRPFGVSLLIAGHDEFNGFSLYQVDPSGSYFPWKATAIGKGSVAAKTFLEKRWNDELELEDAIHIALLTLKESVEGEFNGDTIELAIIGDENPDLLGYTGIPTDKGPRFRKLTSQEINDRLEAL.

Lys108 participates in a covalent cross-link: Glycyl lysine isopeptide (Lys-Gly) (interchain with G-Cter in ubiquitin).

This sequence belongs to the peptidase T1A family. The 26S proteasome consists of a 20S proteasome core and two 19S regulatory subunits. The 20S proteasome core is composed of 28 subunits that are arranged in four stacked rings, resulting in a barrel-shaped structure. The two end rings are each formed by seven alpha subunits, and the two central rings are each formed by seven beta subunits. The catalytic chamber with the active sites is on the inside of the barrel.

Its subcellular location is the cytoplasm. The protein resides in the nucleus. The proteasome degrades poly-ubiquitinated proteins in the cytoplasm and in the nucleus. It is essential for the regulated turnover of proteins and for the removal of misfolded proteins. The proteasome is a multicatalytic proteinase complex that is characterized by its ability to cleave peptides with Arg, Phe, Tyr, Leu, and Glu adjacent to the leaving group at neutral or slightly basic pH. It has an ATP-dependent proteolytic activity. The polypeptide is Proteasome subunit alpha type-2 (PRE8) (Saccharomyces cerevisiae (strain ATCC 204508 / S288c) (Baker's yeast)).